Here is a 140-residue protein sequence, read N- to C-terminus: Organic hydroperoxide resistance protein-like (140 aa).

This sequence belongs to the OsmC/Ohr family.

The chain is Organic hydroperoxide resistance protein-like from Staphylococcus aureus (strain bovine RF122 / ET3-1).